A 71-amino-acid chain; its full sequence is MSKDDLIQFTGTILELLPNATFRVKLENDHGIIAHTSGRMRKNRIRILLGDKVTVEMTPYDLTKGRVIHRH.

Residues 1-71 (MSKDDLIQFT…LTKGRVIHRH (71 aa)) form the S1-like domain.

Belongs to the IF-1 family. Component of the 30S ribosomal translation pre-initiation complex which assembles on the 30S ribosome in the order IF-2 and IF-3, IF-1 and N-formylmethionyl-tRNA(fMet); mRNA recruitment can occur at any time during PIC assembly.

It is found in the cytoplasm. In terms of biological role, one of the essential components for the initiation of protein synthesis. Stabilizes the binding of IF-2 and IF-3 on the 30S subunit to which N-formylmethionyl-tRNA(fMet) subsequently binds. Helps modulate mRNA selection, yielding the 30S pre-initiation complex (PIC). Upon addition of the 50S ribosomal subunit IF-1, IF-2 and IF-3 are released leaving the mature 70S translation initiation complex. In Rickettsia akari (strain Hartford), this protein is Translation initiation factor IF-1.